The chain runs to 41 residues: MPLDRNNNPNQQPVELNRTSLYLGLLLVFVVGILFSSYFFN.

A helical transmembrane segment spans residues 20-40 (SLYLGLLLVFVVGILFSSYFF).

It belongs to the PsbL family. PSII is composed of 1 copy each of membrane proteins PsbA, PsbB, PsbC, PsbD, PsbE, PsbF, PsbH, PsbI, PsbJ, PsbK, PsbL, PsbM, PsbT, PsbX, PsbY, PsbZ, Psb30/Ycf12, peripheral proteins PsbO, CyanoQ (PsbQ), PsbU, PsbV and a large number of cofactors. It forms dimeric complexes.

It localises to the cellular thylakoid membrane. In terms of biological role, one of the components of the core complex of photosystem II (PSII). PSII is a light-driven water:plastoquinone oxidoreductase that uses light energy to abstract electrons from H(2)O, generating O(2) and a proton gradient subsequently used for ATP formation. It consists of a core antenna complex that captures photons, and an electron transfer chain that converts photonic excitation into a charge separation. This subunit is found at the monomer-monomer interface and is required for correct PSII assembly and/or dimerization. This chain is Photosystem II reaction center protein L, found in Trichodesmium erythraeum (strain IMS101).